The chain runs to 690 residues: uncharacterized protein (690 aa).

This is an uncharacterized protein from Acanthamoeba polyphaga (Amoeba).